We begin with the raw amino-acid sequence, 89 residues long: Sugar transporter SemiSWEET (89 aa).

Helical transmembrane passes span 4–27 (ILLT…IKTI), 35–55 (ISVV…AYGI), and 60–82 (FAVL…ITLI). One can recognise a PQ-loop domain in the interval 7–59 (TGLFAAFFTTFAFAPQSIKTIRTRNTEGISVVMYIMFLTGVISWIAYGIMRSD).

As to quaternary structure, homodimer.

The protein localises to the cell membrane. The homodimer mediates transmembrane sugar transport down a concentration gradient. Transport is probably effected by rocking-type movements, where a cargo-binding cavity opens first on one and then on the other side of the membrane. The sequence is that of Sugar transporter SemiSWEET from Escherichia coli (strain UMEA 3162-1).